The primary structure comprises 378 residues: Ribosomal RNA large subunit methyltransferase G (378 aa).

This sequence belongs to the methyltransferase superfamily. RlmG family.

The protein localises to the cytoplasm. It catalyses the reaction guanosine(1835) in 23S rRNA + S-adenosyl-L-methionine = N(2)-methylguanosine(1835) in 23S rRNA + S-adenosyl-L-homocysteine + H(+). Specifically methylates the guanine in position 1835 (m2G1835) of 23S rRNA. The polypeptide is Ribosomal RNA large subunit methyltransferase G (Salmonella dublin (strain CT_02021853)).